We begin with the raw amino-acid sequence, 167 residues long: Leptin (167 aa).

The first 21 residues, M1–A21, serve as a signal peptide directing secretion. C117 and C167 are disulfide-bonded.

The protein belongs to the leptin family.

It localises to the secreted. In terms of biological role, key player in the regulation of energy balance and body weight control. Once released into the circulation, has central and peripheral effects by binding LEPR, found in many tissues, which results in the activation of several major signaling pathways. In the hypothalamus, acts as an appetite-regulating factor that induces a decrease in food intake and an increase in energy consumption by inducing anorexinogenic factors and suppressing orexigenic neuropeptides, also regulates bone mass and secretion of hypothalamo-pituitary-adrenal hormones. In the periphery, increases basal metabolism, influences reproductive function, regulates pancreatic beta-cell function and insulin secretion, is pro-angiogenic for endothelial cell and affects innate and adaptive immunity. In the arcuate nucleus of the hypothalamus, activates by depolarization POMC neurons inducing FOS and SOCS3 expression to release anorexigenic peptides and inhibits by hyperpolarization NPY neurons inducing SOCS3 with a consequent reduction on release of orexigenic peptides. In addition to its known satiety inducing effect, has a modulatory role in nutrient absorption. In the intestine, reduces glucose absorption by enterocytes by activating PKC and leading to a sequential activation of p38, PI3K and ERK signaling pathways which exerts an inhibitory effect on glucose absorption. Acts as a growth factor on certain tissues, through the activation of different signaling pathways increases expression of genes involved in cell cycle regulation such as CCND1, via JAK2-STAT3 pathway, or VEGFA, via MAPK1/3 and PI3K-AKT1 pathways. May also play an apoptotic role via JAK2-STAT3 pathway and up-regulation of BIRC5 expression. Pro-angiogenic, has mitogenic activity on vascular endothelial cells and plays a role in matrix remodeling by regulating the expression of matrix metalloproteinases (MMPs) and tissue inhibitors of metalloproteinases (TIMPs). In innate immunity, modulates the activity and function of neutrophils by increasing chemotaxis and the secretion of oxygen radicals. Increases phagocytosis by macrophages and enhances secretion of pro-inflammatory mediators. Increases cytotoxic ability of NK cells. Plays a pro-inflammatory role, in synergy with IL1B, by inducing NOS2 which promotes the production of IL6, IL8 and Prostaglandin E2, through a signaling pathway that involves JAK2, PI3K, MAP2K1/MEK1 and MAPK14/p38. In adaptive immunity, promotes the switch of memory T-cells towards T helper-1 cell immune responses. Increases CD4(+)CD25(-) T-cell proliferation and reduces autophagy during TCR (T-cell receptor) stimulation, through MTOR signaling pathway activation and BCL2 up-regulation. The protein is Leptin (Lep) of Rattus norvegicus (Rat).